The chain runs to 37 residues: Photosystem II reaction center protein T (37 aa).

Residues 3–23 (ALVYTFLLVSTLGIIFFAIFF) form a helical membrane-spanning segment.

This sequence belongs to the PsbT family. In terms of assembly, PSII is composed of 1 copy each of membrane proteins PsbA, PsbB, PsbC, PsbD, PsbE, PsbF, PsbH, PsbI, PsbJ, PsbK, PsbL, PsbM, PsbT, PsbY, PsbZ, Psb30/Ycf12, at least 3 peripheral proteins of the oxygen-evolving complex and a large number of cofactors. It forms dimeric complexes.

The protein resides in the plastid. It is found in the chloroplast thylakoid membrane. Found at the monomer-monomer interface of the photosystem II (PS II) dimer, plays a role in assembly and dimerization of PSII. PSII is a light-driven water plastoquinone oxidoreductase, using light energy to abstract electrons from H(2)O, generating a proton gradient subsequently used for ATP formation. In Cucumis sativus (Cucumber), this protein is Photosystem II reaction center protein T.